The following is a 119-amino-acid chain: Large ribosomal subunit protein uL18 (119 aa).

The protein belongs to the universal ribosomal protein uL18 family. As to quaternary structure, part of the 50S ribosomal subunit; part of the 5S rRNA/L5/L18/L25 subcomplex. Contacts the 5S and 23S rRNAs.

This is one of the proteins that bind and probably mediate the attachment of the 5S RNA into the large ribosomal subunit, where it forms part of the central protuberance. The chain is Large ribosomal subunit protein uL18 from Cupriavidus necator (strain ATCC 17699 / DSM 428 / KCTC 22496 / NCIMB 10442 / H16 / Stanier 337) (Ralstonia eutropha).